A 482-amino-acid chain; its full sequence is MGAERLKVIIVGGSIAGLTLAHCLDKAGIDYVVLEKRKEITHQEGASILILPHGGRILDQLGMFHSLSQYTEPLHAAHISYPDGFTHTNRSPQVLTDRFGIPLILVERRNLLKVLYNSLPDQSLVQLGKKVVSLNHHNGQVTVTVDDGNVYEGDLVVGADGVHSRVRDEVWRLSDAIRSGTVKDKEKKSMSIEYACIFGISNGVSGLVAGEQVASLNKGRSFLTFPGRDGRVFWFLMHKLDKNYTYPGAPRWSPEDAERIAARYIDDHIWNGVQFKDIWDKREVCGITNLEENIFQTWHSGRVLCLGDSMHKMAPNTGQGANCAMEDAALLANYLRHYLDGQKTAAKPSQEDLNTLFEKFSRDRINRLQSIYKMSRIVVRLHAGRNLFLRLMGRYYLPNTGDVPANQASKSIASGIYLDYLPLPTYSAPGWQDFAPNSKLFSGSLLLIMSVALLFGVICWAGRDIHPLSMKILALLGNYVSQ.

Positions M1–A21 are cleaved as a signal peptide. 2 residues coordinate FAD: E35 and R108. N243 carries N-linked (GlcNAc...) asparagine glycosylation. Positions 308 and 321 each coordinate FAD. A helical transmembrane segment spans residues L440 to W460.

This sequence belongs to the paxM FAD-dependent monooxygenase family. FAD serves as cofactor.

The protein resides in the membrane. Its pathway is secondary metabolite biosynthesis; terpenoid biosynthesis. FAD-dependent monooxygenase; part of the cluster that mediates the biosynthesis of shearones, diterpenoid pyrones (DPs) which are structurally diverse meroterpenoids consisting of a diterpene linked by a pyrone, and which may exhibit a range of bioactivities. Within the pathway, esdpE takes part to the biosynthesis of the molecular scaffold by catalyzing the formation of an (S)-epoxide ring at the terminal olefin of the geranylgeranyl group. The molecular scaffold is commonly biosynthesized by a series of enzymes including the non-reducing polyketide synthase (NR-PKS) esdpA that generates an alpha-pyrone; the prenyltransferase esdpC that attaches a geranylgeranyl pyrophosphate (GGPP) produced by the GGPP synthase (GGPPS) esdpD onto the pyrone unit; the FAD-dependent monooxygenase esdpE that converts an olefin on the diterpene unit into an epoxide; and the terpene cyclase esdpB that catalyzes the cyclization reactions to give the molecular backbone shearone A. In the modification steps, esdpF oxidizes the hydroxy group to a ketone at C-3 and esdpG then attaches hydroxy groups at both C-11 and C-12. After that, esdpI hydroxylates at C-20 and esdpH hydroxylates at C-6'. The ether bridge is generated by nucleophilic attack of the hydroxy group at C-20 to the carbonyl carbon at C-3. EsdpH can also functions prior to esdpI. The different combinations of these modification enzymes lead to the production of diverse shearone derivatives, shearone I being the end product of the pathway. The alpha-ketoglutarate-dependent dioxygenase esdpJ seems not to be involved in this pathway. The protein is FAD-dependent monooxygenase esdpE of Penicillium shearii (Eupenicillium shearii).